Reading from the N-terminus, the 319-residue chain is Acetyl-coenzyme A carboxylase carboxyl transferase subunit alpha (319 aa).

The CoA carboxyltransferase C-terminal domain maps to 32-293; it reads NVDTEVRALE…KAVLLNELEA (262 aa).

It belongs to the AccA family. As to quaternary structure, acetyl-CoA carboxylase is a heterohexamer composed of biotin carboxyl carrier protein (AccB), biotin carboxylase (AccC) and two subunits each of ACCase subunit alpha (AccA) and ACCase subunit beta (AccD).

It localises to the cytoplasm. It catalyses the reaction N(6)-carboxybiotinyl-L-lysyl-[protein] + acetyl-CoA = N(6)-biotinyl-L-lysyl-[protein] + malonyl-CoA. It participates in lipid metabolism; malonyl-CoA biosynthesis; malonyl-CoA from acetyl-CoA: step 1/1. In terms of biological role, component of the acetyl coenzyme A carboxylase (ACC) complex. First, biotin carboxylase catalyzes the carboxylation of biotin on its carrier protein (BCCP) and then the CO(2) group is transferred by the carboxyltransferase to acetyl-CoA to form malonyl-CoA. The sequence is that of Acetyl-coenzyme A carboxylase carboxyl transferase subunit alpha from Xylella fastidiosa (strain M12).